Consider the following 238-residue polypeptide: tRNA (guanine-N(7)-)-methyltransferase (238 aa).

Residues Glu-68, Glu-93, Asp-120, and Asp-143 each contribute to the S-adenosyl-L-methionine site. Asp-143 is a catalytic residue. Substrate is bound by residues Lys-147, Asp-179, and 216–219 (TKFE).

Belongs to the class I-like SAM-binding methyltransferase superfamily. TrmB family.

The enzyme catalyses guanosine(46) in tRNA + S-adenosyl-L-methionine = N(7)-methylguanosine(46) in tRNA + S-adenosyl-L-homocysteine. The protein operates within tRNA modification; N(7)-methylguanine-tRNA biosynthesis. Catalyzes the formation of N(7)-methylguanine at position 46 (m7G46) in tRNA. This Shewanella sp. (strain W3-18-1) protein is tRNA (guanine-N(7)-)-methyltransferase.